We begin with the raw amino-acid sequence, 489 residues long: Glycogen synthase (489 aa).

Residue R20 coordinates ADP-alpha-D-glucose.

Belongs to the glycosyltransferase 1 family. Bacterial/plant glycogen synthase subfamily.

It catalyses the reaction [(1-&gt;4)-alpha-D-glucosyl](n) + ADP-alpha-D-glucose = [(1-&gt;4)-alpha-D-glucosyl](n+1) + ADP + H(+). The protein operates within glycan biosynthesis; glycogen biosynthesis. In terms of biological role, synthesizes alpha-1,4-glucan chains using ADP-glucose. The polypeptide is Glycogen synthase (Chlorobium luteolum (strain DSM 273 / BCRC 81028 / 2530) (Pelodictyon luteolum)).